The chain runs to 176 residues: Large ribosomal subunit protein uL6 (176 aa).

A compositionally biased stretch (basic and acidic residues) spans 151-170; that stretch reads RPPEPYKGKGVRYADEQVRR. The interval 151–176 is disordered; it reads RPPEPYKGKGVRYADEQVRRKEAKKK.

The protein belongs to the universal ribosomal protein uL6 family. As to quaternary structure, part of the 50S ribosomal subunit.

Its function is as follows. This protein binds to the 23S rRNA, and is important in its secondary structure. It is located near the subunit interface in the base of the L7/L12 stalk, and near the tRNA binding site of the peptidyltransferase center. This Shewanella halifaxensis (strain HAW-EB4) protein is Large ribosomal subunit protein uL6.